The chain runs to 539 residues: Glutamyl-tRNA(Gln) amidotransferase subunit A, mitochondrial (539 aa).

Residues lysine 94 and serine 181 each act as charge relay system in the active site. The active-site Acyl-ester intermediate is the serine 205.

Belongs to the amidase family. GatA subfamily. In terms of assembly, subunit of the heterotrimeric GatCAB amidotransferase (AdT) complex, composed of A, B and C subunits.

The protein resides in the mitochondrion. It catalyses the reaction L-glutamyl-tRNA(Gln) + L-glutamine + ATP + H2O = L-glutaminyl-tRNA(Gln) + L-glutamate + ADP + phosphate + H(+). Functionally, allows the formation of correctly charged Gln-tRNA(Gln) through the transamidation of misacylated Glu-tRNA(Gln) in the mitochondria. The reaction takes place in the presence of glutamine and ATP through an activated gamma-phospho-Glu-tRNA(Gln). This Mycosarcoma maydis (Corn smut fungus) protein is Glutamyl-tRNA(Gln) amidotransferase subunit A, mitochondrial.